The sequence spans 79 residues: uncharacterized protein (79 aa).

This is an uncharacterized protein from Caenorhabditis elegans.